The following is a 289-amino-acid chain: MNSENSFSSSEHITVLLHEAVNGLALKENGIYIDGTFGRGGHSRFILSQLSSNGRLIAVDRDPRAIAEAHKIQDLRFQIEHNSFSHIPEICDKLNLVGKIDGILLDLGVSSPQLDEAERGFSFMKDGPLDMRMDTTQGLSAEEWLKQVSIEDLTWVLKTFGEERFAKRIATAIVDFNKSAVKNGTEFLSRTSQLAELISQAVPFKDKHKHPATRSFQAIRIFINSELDELESLLNSALDMLAPEGRLSIISFHSLEDRMVKHFMKNKVRARIFPKVYHCEKIKFSVIKN.

Residues glycine 40–histidine 42, aspartate 60, phenylalanine 84, aspartate 106, and glutamine 113 contribute to the S-adenosyl-L-methionine site.

It belongs to the methyltransferase superfamily. RsmH family.

The protein localises to the cytoplasm. It carries out the reaction cytidine(1402) in 16S rRNA + S-adenosyl-L-methionine = N(4)-methylcytidine(1402) in 16S rRNA + S-adenosyl-L-homocysteine + H(+). Functionally, specifically methylates the N4 position of cytidine in position 1402 (C1402) of 16S rRNA. This Haemophilus influenzae (strain PittGG) protein is Ribosomal RNA small subunit methyltransferase H.